The primary structure comprises 768 residues: UPF0313 protein VV2143 (768 aa).

One can recognise a Radical SAM core domain in the interval 363 to 640 (AYDMIKTSVN…LHKALLRYHD (278 aa)). Positions 377, 381, and 384 each coordinate [4Fe-4S] cluster. Positions 674-768 (DARTPAQRRK…GGRNQPSRAR (95 aa)) are disordered. Over residues 679 to 689 (AQRRKSGRHGA) the composition is skewed to basic residues. Over residues 719-731 (GGQSNSAPSRSGS) the composition is skewed to polar residues.

This sequence belongs to the UPF0313 family. The cofactor is [4Fe-4S] cluster.

This chain is UPF0313 protein VV2143, found in Vibrio vulnificus (strain YJ016).